Here is a 58-residue protein sequence, read N- to C-terminus: Large ribosomal subunit protein bL32 (58 aa).

This sequence belongs to the bacterial ribosomal protein bL32 family.

This chain is Large ribosomal subunit protein bL32, found in Ligilactobacillus salivarius (strain UCC118) (Lactobacillus salivarius).